The primary structure comprises 275 residues: Methylglyoxal reductase DkgA (275 aa).

Y51 acts as the Proton donor in catalysis. Residue H107 participates in substrate binding. 187–241 serves as a coordination point for NADP(+); that stretch reads SPLAQGGEGVFDQKVIRELADKYGKTPAQIVIRWHLDCGLVVIPKSVTPSRIAEN.

It belongs to the aldo/keto reductase family. As to quaternary structure, monomer.

It is found in the cytoplasm. The catalysed reaction is hydroxyacetone + NADP(+) = methylglyoxal + NADPH + H(+). Functionally, aldo-keto reductase that significantly contributes to cellular methylglyoxal detoxification by catalyzing the NADPH-dependent conversion of methylglyoxal to acetol. In Salmonella typhimurium (strain LT2 / SGSC1412 / ATCC 700720), this protein is Methylglyoxal reductase DkgA.